Here is a 319-residue protein sequence, read N- to C-terminus: Nucleotide-binding protein Rru_A3448 (319 aa).

The segment at 1-34 (MGRSASLLRLRDPAPLPTDIAPDPAEAPPSPAAD) is disordered. 42–49 (GMSGAGRT) lines the ATP pocket. A GTP-binding site is contributed by 90–93 (DTRT).

The protein belongs to the RapZ-like family.

Displays ATPase and GTPase activities. In Rhodospirillum rubrum (strain ATCC 11170 / ATH 1.1.1 / DSM 467 / LMG 4362 / NCIMB 8255 / S1), this protein is Nucleotide-binding protein Rru_A3448.